Consider the following 1189-residue polypeptide: Pesticidal crystal protein Cry1Ca (1189 aa).

It belongs to the delta endotoxin family.

Promotes colloidosmotic lysis by binding to the midgut epithelial cells of many lepidopteran larvae including Spodoptera species. The chain is Pesticidal crystal protein Cry1Ca (cry1Ca) from Bacillus thuringiensis subsp. aizawai.